The following is a 404-amino-acid chain: Aspartokinase 1 (404 aa).

Residue 7–10 (KFGG) participates in ATP binding. Residue 25-30 (HIKEAI) coordinates substrate. S41 contacts ATP. Substrate is bound by residues 52-54 (TDS), E79, 130-131 (LA), 155-158 (RGGS), and S158. Residues 178–179 (TD) and 184–189 (MTADPR) contribute to the ATP site. Substrate contacts are provided by residues 299-301 (SVD), 355-356 (VT), 369-370 (PI), and 376-377 (SH). The region spanning 344-404 (AVGAGIMGVP…ALHEVFELSK (61 aa)) is the ACT domain.

This sequence belongs to the aspartokinase family. In terms of assembly, tetramer consisting of 2 isoforms Alpha (catalytic) and 2 isoforms Beta (function not known).

It carries out the reaction L-aspartate + ATP = 4-phospho-L-aspartate + ADP. It functions in the pathway amino-acid biosynthesis; L-lysine biosynthesis via DAP pathway; (S)-tetrahydrodipicolinate from L-aspartate: step 1/4. Its pathway is amino-acid biosynthesis; L-methionine biosynthesis via de novo pathway; L-homoserine from L-aspartate: step 1/3. The protein operates within amino-acid biosynthesis; L-threonine biosynthesis; L-threonine from L-aspartate: step 1/5. Diaminopimelate-sensitive. Catalyzes the phosphorylation of the beta-carboxyl group of aspartic acid with ATP to yield 4-phospho-L-aspartate, which is involved in the branched biosynthetic pathway leading to the biosynthesis of amino acids threonine, isoleucine and methionine. This is Aspartokinase 1 (dapG) from Bacillus subtilis (strain 168).